We begin with the raw amino-acid sequence, 122 residues long: Large ribosomal subunit protein bL12 (122 aa).

The protein belongs to the bacterial ribosomal protein bL12 family. Homodimer. Part of the ribosomal stalk of the 50S ribosomal subunit. Forms a multimeric L10(L12)X complex, where L10 forms an elongated spine to which 2 to 4 L12 dimers bind in a sequential fashion. Binds GTP-bound translation factors.

Functionally, forms part of the ribosomal stalk which helps the ribosome interact with GTP-bound translation factors. Is thus essential for accurate translation. This chain is Large ribosomal subunit protein bL12, found in Vibrio campbellii (strain ATCC BAA-1116).